The sequence spans 164 residues: Cytochrome c-type biogenesis protein CcmE (164 aa).

Over 1–8 the chain is Cytoplasmic; it reads MNPRRKSR. A helical; Signal-anchor for type II membrane protein membrane pass occupies residues 9-29; it reads LYLAVVVLIGIGLTTTLVLYA. The Periplasmic segment spans residues 30–164; sequence LRSNIDLFYT…NSTAAQGNAS (135 aa). Residues His130 and Tyr134 each contribute to the heme site. Residues 131–150 are compositionally biased toward basic and acidic residues; the sequence is DEKYTPPEVKEAMKENHTRP. The interval 131 to 164 is disordered; the sequence is DEKYTPPEVKEAMKENHTRPAEAYNSTAAQGNAS. A compositionally biased stretch (polar residues) spans 154 to 164; it reads YNSTAAQGNAS.

The protein belongs to the CcmE/CycJ family.

It is found in the cell inner membrane. In terms of biological role, heme chaperone required for the biogenesis of c-type cytochromes. Transiently binds heme delivered by CcmC and transfers the heme to apo-cytochromes in a process facilitated by CcmF and CcmH. The polypeptide is Cytochrome c-type biogenesis protein CcmE (Yersinia enterocolitica serotype O:8 / biotype 1B (strain NCTC 13174 / 8081)).